A 960-amino-acid chain; its full sequence is MEGAHLAWELAHAVLLLSLIPAGGSVPHEESSLVVNKGEELRLKCNEEGPVTWNFQNSDPSAKTRISNEKEWHTKNATIRDIGRYECKSKGSIVNSFYVFVKDPNVLFLVDSLIYGKEDSDILLVCPLTDPDVLNFTLRKCDGKPLPKNMTFIPNPQKGIIIKNVQRSFKGCYQCLAKHNGVEKISEHIFLNVRPVHKALPVITLSKSYELLKEGEEFEVTCIITDVDSSVKASWISYKSAIVTSKSRNLGDYGYERKLTLNIRSVGVNDSGEFTCQAENPFGKTNATVTLKALAKGFVRLFATMNTTIDINAGQNGNLTVEYEAYPKPKEEVWMYMNETLQNSSDHYVKFKTVGNNSYTSELHLTRLKGTEGGIYTFFVSNSDASSSVTFNVYVKTKPEILTLDMLGNDILQCVATGFPAPTIYWYFCPGTEQRCLDSPTISPMDVKVSYTNSSVPSFERILVESTVNASMFKSTGTICCEASSNGDKSSVFFNFAIKEQIRTHTLFTPLLIAFGVAAGLMCIIVMILVYIYLQKPKYEVQWKVVEEINGNNYVYIDPTQLPYDHKWEFPRNRLSFGKTLGAGAFGKVVEATAYGLFKSDAAMTVAVKMLKPSAHLTEREALMSELKVLSYLGNHINIVNLLGACTIGGPTLVITEYCCYGDLLNFLRRKRDSFICPKHEEHAEAAVYENLLHQAEPTADAVNEYMDMKPGVSYAVPPKADKKRPVKSGSYTDQDVTLSMLEDDELALDVEDLLSFSYQVAKGMSFLASKNCIHRDLAARNILLTHGRITKICDFGLARDIRNDSNYVVKGNARLPVKWMAPESIFNCVYTFESDVWSYGILLWELFSLGSSPYPGMPVDSKFYKMIKEGYRMFSPECSPPEMYDIMKSCWDADPLQRPTFKQIVQLIEQQLSDNAPRVYANFSTPPSTQGNATDHSVRINSVGSSASSTQPLLVREDV.

An N-terminal signal peptide occupies residues 1 to 24; sequence MEGAHLAWELAHAVLLLSLIPAGG. The Extracellular portion of the chain corresponds to 25-511; the sequence is SVPHEESSLV…IRTHTLFTPL (487 aa). 5 Ig-like C2-type domains span residues 27–102, 111–194, 201–294, 303–396, and 399–497; these read PHEE…VFVK, DSLI…LNVR, PVIT…LKAL, ATMN…VYVK, and PEIL…FNFA. Cystine bridges form between cysteine 45–cysteine 87, cysteine 126–cysteine 175, cysteine 141–cysteine 172, and cysteine 222–cysteine 276. Residues asparagine 76, asparagine 135, asparagine 149, asparagine 269, asparagine 286, asparagine 306, asparagine 318, asparagine 338, asparagine 343, asparagine 356, asparagine 453, and asparagine 469 are each glycosylated (N-linked (GlcNAc...) asparagine). A disulfide bridge links cysteine 414 with cysteine 481. The helical transmembrane segment at 512 to 532 threads the bilayer; the sequence is LIAFGVAAGLMCIIVMILVYI. Residues 533–960 lie on the Cytoplasmic side of the membrane; that stretch reads YLQKPKYEVQ…TQPLLVREDV (428 aa). Mg(2+) is bound at residue tyrosine 554. Phosphotyrosine; by autocatalysis occurs at positions 554 and 556. The region spanning 575 to 913 is the Protein kinase domain; that stretch reads LSFGKTLGAG…QIVQLIEQQL (339 aa). Residues 582-589, lysine 609, and 657-663 contribute to the ATP site; these read GAGAFGKV and EYCCYGD. Phosphotyrosine; by autocatalysis is present on residues tyrosine 689 and tyrosine 706. Aspartate 777 serves as the catalytic Proton acceptor. Residue arginine 781 coordinates ATP. Asparagine 782 and aspartate 795 together coordinate Mg(2+). A phosphotyrosine; by autocatalysis mark is found at tyrosine 808 and tyrosine 921.

It belongs to the protein kinase superfamily. Tyr protein kinase family. CSF-1/PDGF receptor subfamily. Ubiquitinated. KIT is rapidly ubiquitinated after autophosphorylation induced by KITLG/SCF binding, leading to internalization and degradation. Post-translationally, autophosphorylated on tyrosine residues. KITLG/SCF binding promotes autophosphorylation. Phosphorylated tyrosine residues are important for interaction with specific binding partners. As to expression, high in the brain and testes and also present in the bursa of Fabricus, heart, kidney, lung, spleen thymus and ovary.

It is found in the cell membrane. It carries out the reaction L-tyrosyl-[protein] + ATP = O-phospho-L-tyrosyl-[protein] + ADP + H(+). In terms of biological role, tyrosine-protein kinase that acts as a cell-surface receptor for the cytokine KITLG/SCF and plays an essential role in the regulation of cell survival and proliferation, hematopoiesis, stem cell maintenance, gametogenesis, mast cell development, migration and function, and in melanogenesis. In response to KITLG/SCF binding, KIT can activate several signaling pathways. Promotes phosphorylation of PIK3R1, the regulatory subunit of phosphatidylinositol 3-kinase, and subsequent activation of the kinase AKT1. Activated KIT also transmits signals via GRB2 and activation of RAS, RAF1 and the MAP kinases MAPK1/ERK2 and/or MAPK3/ERK1. Promotes activation of STAT family members STAT1, STAT3, STAT5A and STAT5B. KIT promotes activation of PLCG1, leading to the production of the cellular signaling molecules diacylglycerol and inositol 1,4,5-trisphosphate. KIT signaling is modulated by protein phosphatases, and by rapid internalization and degradation of the receptor. This Gallus gallus (Chicken) protein is Mast/stem cell growth factor receptor Kit (KIT).